The sequence spans 619 residues: ETS-related transcription factor Elf-1 (619 aa).

Residues Ser-110, Ser-163, Ser-167, and Ser-168 each carry the phosphoserine modification. The segment at Glu-158 to Lys-199 is disordered. The segment covering Lys-173–Pro-182 has biased composition (basic residues). A Phosphoserine modification is found at Ser-187. Position 190 is a phosphothreonine (Thr-190). Residues Ile-208–Lys-290 constitute a DNA-binding region (ETS). Positions Asn-300–Glu-366 are disordered. Residues Ser-305 to Ser-321 are compositionally biased toward low complexity. Residues Asn-322–Pro-335 are compositionally biased toward polar residues. Ser-432 carries the post-translational modification Phosphoserine. The interval Thr-564–Tyr-592 is disordered. Positions Glu-568 to Glu-586 are enriched in basic and acidic residues.

The protein belongs to the ETS family. As to quaternary structure, binds to the underphosphorylated form of RB. May interact with other transcription factors in order to regulate specific genes. Interacts with RUNX1. In terms of tissue distribution, in fetal tissues, it is highly expressed in heart, lung liver and kidney, and weakly expressed in brain. In adult, it is highly expressed in pancreas, spleen, thymus and peripheral blood leukocytes, expressed at moderate levels in heart, placenta, lung, liver, skeletal muscle, kidney, prostate, ovary, small intestine and colon, and weakly expressed in brain and testis.

The protein localises to the nucleus. Transcription factor that activates the LYN and BLK promoters. Appears to be required for the T-cell-receptor-mediated trans activation of HIV-2 gene expression. Binds specifically to two purine-rich motifs in the HIV-2 enhancer. The sequence is that of ETS-related transcription factor Elf-1 (ELF1) from Homo sapiens (Human).